The chain runs to 487 residues: NADH-quinone oxidoreductase subunit N (487 aa).

Helical transmembrane passes span Leu-8–Ile-28, Phe-35–Val-55, Gly-78–Tyr-98, Glu-104–His-124, Leu-125–Tyr-145, Tyr-159–Ala-179, Ile-203–Phe-223, Pro-235–Met-255, Leu-271–Gln-291, Leu-297–Gln-317, Ile-328–Leu-348, Ala-376–Gly-396, Leu-409–Leu-428, and Ala-451–Ile-471.

It belongs to the complex I subunit 2 family. NDH-1 is composed of 13 different subunits. Subunits NuoA, H, J, K, L, M, N constitute the membrane sector of the complex.

Its subcellular location is the cell inner membrane. The enzyme catalyses a quinone + NADH + 5 H(+)(in) = a quinol + NAD(+) + 4 H(+)(out). Its function is as follows. NDH-1 shuttles electrons from NADH, via FMN and iron-sulfur (Fe-S) centers, to quinones in the respiratory chain. The immediate electron acceptor for the enzyme in this species is believed to be ubiquinone. Couples the redox reaction to proton translocation (for every two electrons transferred, four hydrogen ions are translocated across the cytoplasmic membrane), and thus conserves the redox energy in a proton gradient. The chain is NADH-quinone oxidoreductase subunit N from Yersinia pseudotuberculosis serotype O:1b (strain IP 31758).